Consider the following 439-residue polypeptide: Paraneoplastic antigen-like protein 8A (439 aa).

The tract at residues 208-439 (SALKAETPNN…RRATNESRKV (232 aa)) is disordered. Residues 231–249 (LVRRAGAKSRSRRKKQKKN) show a composition bias toward basic residues. 3 stretches are compositionally biased toward basic and acidic residues: residues 314–326 (GPRE…RAEA), 395–404 (SRREASDQKA), and 423–439 (AKPE…SRKV).

Belongs to the PNMA family.

This Homo sapiens (Human) protein is Paraneoplastic antigen-like protein 8A.